The chain runs to 325 residues: NADH-quinone oxidoreductase subunit H (325 aa).

A run of 8 helical transmembrane segments spans residues Leu-5–Tyr-25, Phe-75–Ile-95, Val-117–Gly-137, Ile-157–Leu-177, Trp-190–Thr-210, Phe-240–Phe-260, Asp-268–Val-288, and Trp-305–Val-325.

It belongs to the complex I subunit 1 family. NDH-1 is composed of 14 different subunits. Subunits NuoA, H, J, K, L, M, N constitute the membrane sector of the complex.

It is found in the cell inner membrane. It carries out the reaction a quinone + NADH + 5 H(+)(in) = a quinol + NAD(+) + 4 H(+)(out). Functionally, NDH-1 shuttles electrons from NADH, via FMN and iron-sulfur (Fe-S) centers, to quinones in the respiratory chain. The immediate electron acceptor for the enzyme in this species is believed to be ubiquinone. Couples the redox reaction to proton translocation (for every two electrons transferred, four hydrogen ions are translocated across the cytoplasmic membrane), and thus conserves the redox energy in a proton gradient. This subunit may bind ubiquinone. The polypeptide is NADH-quinone oxidoreductase subunit H (Protochlamydia amoebophila (strain UWE25)).